The following is a 151-amino-acid chain: UPAR/Ly6 domain-containing protein crok (151 aa).

The first 23 residues, 1-23 (MKTLEKYILFAIVLCCLLQLGQA), serve as a signal peptide directing secretion. Residues 24–128 (IKCWDCRSDN…KDGCNSAGIH (105 aa)) lie on the Lumenal side of the membrane. 5 cysteine pairs are disulfide-bonded: C26-C68, C29-C37, C51-C85, C100-C114, and C116-C122. An N-linked (GlcNAc...) asparagine glycan is attached at N43. The GPI-anchor amidated serine moiety is linked to residue S124. The propeptide at 125-151 (AGIHRLGLMGVLTGTLLSVIVAHLLRQ) is removed in mature form. Residues 129–149 (RLGLMGVLTGTLLSVIVAHLL) traverse the membrane as a helical segment. At 150-151 (RQ) the chain is on the cytoplasmic side.

Belongs to the quiver family.

Its subcellular location is the vesicle. The protein localises to the membrane. It is found in the endomembrane system. Functionally, required for septate junction assembly, possibly by organizing the preassembly and transport of septate junction proteins including dlg1/disks large 1 and Nrx-IV/Neurexin-IV. Involved in paracellular barrier functions of trachea, hindgut and salivary gland mediated by epithelial cell septate junctions. This is UPAR/Ly6 domain-containing protein crok from Drosophila melanogaster (Fruit fly).